The chain runs to 253 residues: Hydroxyacylglutathione hydrolase (253 aa).

7 residues coordinate Zn(2+): H54, H56, D58, H59, H112, D131, and H169.

This sequence belongs to the metallo-beta-lactamase superfamily. Glyoxalase II family. Monomer. The cofactor is Zn(2+).

It carries out the reaction an S-(2-hydroxyacyl)glutathione + H2O = a 2-hydroxy carboxylate + glutathione + H(+). It functions in the pathway secondary metabolite metabolism; methylglyoxal degradation; (R)-lactate from methylglyoxal: step 2/2. Its function is as follows. Thiolesterase that catalyzes the hydrolysis of S-D-lactoyl-glutathione to form glutathione and D-lactic acid. The protein is Hydroxyacylglutathione hydrolase of Bartonella henselae (strain ATCC 49882 / DSM 28221 / CCUG 30454 / Houston 1) (Rochalimaea henselae).